The sequence spans 1040 residues: Contactin-2 (1040 aa).

An N-terminal signal peptide occupies residues 1-30; the sequence is MGTHARKKASLLLLVLATVALVSSPGWSFA. Ig-like C2-type domains are found at residues 39 to 130, 135 to 224, 241 to 324, 329 to 413, 419 to 506, and 511 to 605; these read PIFE…AVLR, QEFS…SVFS, PSIK…GRII, PEWL…AELA, PDFR…GILS, and TKIT…ATVL. Cystine bridges form between Cys-63-Cys-113, Cys-157-Cys-209, Cys-263-Cys-308, and Cys-350-Cys-397. 3 N-linked (GlcNAc...) asparagine glycosylation sites follow: Asn-78, Asn-200, and Asn-206. Asn-463, Asn-479, Asn-500, and Asn-527 each carry an N-linked (GlcNAc...) asparagine glycan. 4 Fibronectin type-III domains span residues 612-710, 715-812, 817-913, and 917-1008; these read PPGG…TKEA, APSG…SAEE, APAK…VKPP, and PPGN…NGGT. An N-linked (GlcNAc...) asparagine glycan is attached at Asn-777. The Cell attachment site signature appears at 796–798; that stretch reads RGD. N-linked (GlcNAc...) asparagine glycosylation is found at Asn-832, Asn-920, and Asn-942. The disordered stretch occupies residues 895–921; that stretch reads RAGTGPASPSADAMTVKPPPRRPPGNI. Ala-1015 is lipidated: GPI-anchor amidated alanine. The propeptide at 1016–1040 is removed in mature form; the sequence is AARPAHPGPAFSCMVILMLAGYQKL.

This sequence belongs to the immunoglobulin superfamily. Contactin family. In neural tissues in embryos, and in adult brain, spinal cord and cerebellum.

Its subcellular location is the cell membrane. Its function is as follows. May play a role in the initial growth and guidance of axons. May be involved in cell adhesion. In conjunction with another transmembrane protein, CNTNAP2, contributes to the organization of axonal domains at nodes of Ranvier by maintaining voltage-gated potassium channels at the juxtaparanodal region. In Rattus norvegicus (Rat), this protein is Contactin-2 (Cntn2).